The following is an 886-amino-acid chain: UPF0592 membrane protein C7D4.03c (886 aa).

Residues 87-112 (ILNEPYNESPSSSSSDSSSRSTSPFS) form a disordered region. Positions 95–112 (SPSSSSSDSSSRSTSPFS) are enriched in low complexity. Transmembrane regions (helical) follow at residues 277–297 (FCAS…DHFL), 374–394 (GGFF…QFSF), and 400–420 (VIYF…LTIS).

Belongs to the UPF0592 family.

The protein localises to the membrane. The chain is UPF0592 membrane protein C7D4.03c from Schizosaccharomyces pombe (strain 972 / ATCC 24843) (Fission yeast).